We begin with the raw amino-acid sequence, 333 residues long: Glycerol-3-phosphate dehydrogenase [NAD(P)+] (333 aa).

NADPH-binding residues include Trp15 and Lys108. Residues Lys108, Gly136, and Ser138 each coordinate sn-glycerol 3-phosphate. Residue Ala140 coordinates NADPH. Sn-glycerol 3-phosphate contacts are provided by Lys191, Asp244, Ser254, Arg255, and Asn256. Lys191 functions as the Proton acceptor in the catalytic mechanism. Arg255 is a binding site for NADPH. Residues Val279 and Glu281 each coordinate NADPH.

The protein belongs to the NAD-dependent glycerol-3-phosphate dehydrogenase family.

It localises to the cytoplasm. The enzyme catalyses sn-glycerol 3-phosphate + NAD(+) = dihydroxyacetone phosphate + NADH + H(+). It catalyses the reaction sn-glycerol 3-phosphate + NADP(+) = dihydroxyacetone phosphate + NADPH + H(+). Its pathway is membrane lipid metabolism; glycerophospholipid metabolism. Catalyzes the reduction of the glycolytic intermediate dihydroxyacetone phosphate (DHAP) to sn-glycerol 3-phosphate (G3P), the key precursor for phospholipid synthesis. The polypeptide is Glycerol-3-phosphate dehydrogenase [NAD(P)+] (Maricaulis maris (strain MCS10) (Caulobacter maris)).